A 512-amino-acid chain; its full sequence is Monocarboxylate transporter 10 (512 aa).

Residues 1 to 44 are disordered; sequence MVPSQEEPAAERETNEAQPPGPAPSDDAPLPGPGPSDVSDVAAE. Over 1–63 the chain is Cytoplasmic; sequence MVPSQEEPAA…AGSEPPVPPE (63 aa). The chain crosses the membrane as a helical span at residues 64-84; it reads GGWGWLVMLAAMWCNGSVFGI. The Extracellular portion of the chain corresponds to 85 to 111; the sequence is QNAYGVLFVSMLDTFKAKDDDNMAFKT. The chain crosses the membrane as a helical span at residues 112–132; that stretch reads AWVGSLSMGMIFFCCPIVSVF. The Cytoplasmic segment spans residues 133-141; the sequence is TDMFGCRRT. A helical membrane pass occupies residues 142–162; that stretch reads AVVGAAVGFIGLMSSSFVSSI. Topologically, residues 163 to 168 are extracellular; the sequence is EPLYLT. Residues 169–189 form a helical membrane-spanning segment; that stretch reads YGIIFACGCSFAYQPSLVILG. At 190–201 the chain is on the cytoplasmic side; the sequence is HYFKKRLGLVNG. Residues 202-222 form a helical membrane-spanning segment; that stretch reads IVTAGSSVFTILLPLLLGNLI. At 223-232 the chain is on the extracellular side; the sequence is SSVKLFNTLR. The helical transmembrane segment at 233–253 threads the bilayer; sequence ILCIFMFVLFLAGFTYRPLVP. Topologically, residues 254–291 are cytoplasmic; that stretch reads STKEKESGGSRSSFFSRRKLSPPKKVFNFALFKETTYA. Residue S260 is modified to Phosphoserine. A helical membrane pass occupies residues 292–312; sequence VWAAGIPLALFGYFVPYVHLM. The Extracellular segment spans residues 313–326; sequence NHVKERFQDVNNKE. The chain crosses the membrane as a helical span at residues 327 to 347; sequence VLFMCIGITSGVGRLLFGRIA. The Cytoplasmic portion of the chain corresponds to 348 to 362; it reads DYLPGVKKVYLQVLS. Residues 363-383 form a helical membrane-spanning segment; sequence FFFIGLMSMMIPLCSAFGALI. Residue A384 is a topological domain, extracellular. A helical membrane pass occupies residues 385–405; it reads VCLAMGLFDGCFISIMAPIAF. Topologically, residues 406 to 416 are cytoplasmic; it reads ELVGPQDASQA. The chain crosses the membrane as a helical span at residues 417 to 437; it reads IGFLLGFMSIPMTVGPPIAGL. Topologically, residues 438–448 are extracellular; it reads LHDKLGTYDVA. Residues 449–469 traverse the membrane as a helical segment; it reads FYLAGIPPFVGGVVLCLIPWI. The Cytoplasmic portion of the chain corresponds to 470–512; that stretch reads HSKKQRKISKNAGGEKMEKMLENQSSLLSGSSGIFKKDSASII. Phosphoserine occurs at positions 495, 498, 500, and 501.

The protein belongs to the major facilitator superfamily. Monocarboxylate porter (TC 2.A.1.13) family. Not N-glycosylated. Highly expressed in small intestine, particularly in jejunum and ileum, scarcely in colon and substantially in kidney, liver and skeletal muscle. In the brain expression is low and appears to be restricted to a subset of neurons, microglia cells, and oligodendrocytes.

It localises to the cell membrane. The protein resides in the basolateral cell membrane. It catalyses the reaction L-tryptophan(in) = L-tryptophan(out). The catalysed reaction is L-tyrosine(in) = L-tyrosine(out). The enzyme catalyses L-phenylalanine(in) = L-phenylalanine(out). It carries out the reaction 3,3',5-triiodo-L-thyronine(out) = 3,3',5-triiodo-L-thyronine(in). It catalyses the reaction L-thyroxine(out) = L-thyroxine(in). Functionally, sodium- and proton-independent thyroid hormones and aromatic acids transporter. Mediates both uptake and efflux of 3,5,3'-triiodothyronine (T3) and 3,5,3',5'-tetraiodothyronine (T4) with high affinity, suggesting a role in the homeostasis of thyroid hormone levels. Responsible for low affinity bidirectional transport of the aromatic amino acids, such as phenylalanine, tyrosine, tryptophan and L-3,4-dihydroxyphenylalanine (L-dopa). Plays an important role in homeostasis of aromatic amino acids. In Mus musculus (Mouse), this protein is Monocarboxylate transporter 10 (Slc16a10).